Consider the following 455-residue polypeptide: Kynurenine 3-monooxygenase (455 aa).

It belongs to the aromatic-ring hydroxylase family. KMO subfamily. Requires FAD as cofactor.

It carries out the reaction L-kynurenine + NADPH + O2 + H(+) = 3-hydroxy-L-kynurenine + NADP(+) + H2O. The protein operates within cofactor biosynthesis; NAD(+) biosynthesis; quinolinate from L-kynurenine: step 1/3. Its function is as follows. Catalyzes the hydroxylation of L-kynurenine (L-Kyn) to form 3-hydroxy-L-kynurenine (L-3OHKyn). Required for synthesis of quinolinic acid. The protein is Kynurenine 3-monooxygenase of Xanthomonas euvesicatoria pv. vesicatoria (strain 85-10) (Xanthomonas campestris pv. vesicatoria).